Reading from the N-terminus, the 395-residue chain is Phosphatidylinositol 4-phosphate 5-kinase-like protein 1 (395 aa).

The segment at 1-25 (MATPSLRSHEIPAHSQEAGNKSISS) is disordered. A PIPK domain is found at 37-394 (ARQSRVGLFE…RLCRWAEVHT (358 aa)).

In terms of assembly, interacts with type I phosphatidylinositol 4-phosphate 5-kinases, including PIP5K1A and PIP5K1B. As to expression, highly expressed in brain and testis, relatively to heart, spleen, lung, liver, skeletal muscle and kidney.

Its subcellular location is the cytoplasm. It localises to the membrane. Its function is as follows. May act as a scaffold to localize and regulate type I phosphatidylinositol 4-phosphate 5-kinases to specific compartments within the cell, where they generate PI(4,5)P2 for actin nucleation, signaling and scaffold protein recruitment and conversion to PI(3,4,5)P3. This Mus musculus (Mouse) protein is Phosphatidylinositol 4-phosphate 5-kinase-like protein 1 (Pip5kl1).